The following is a 211-amino-acid chain: Glycerol-3-phosphate acyltransferase (211 aa).

Helical transmembrane passes span 8–28 (YCLALLGGYLLGSIPFGLILT), 84–104 (LALPAGIAAVIGHLFPVWLGF), 116–136 (VLLATAWPVGLICCALWFAVA), 145–165 (AALCAFAFAPLLALAVGGMGL), and 170–190 (LAQSHWQAAAAFMLIAVLVFL).

The protein belongs to the PlsY family. In terms of assembly, probably interacts with PlsX.

The protein localises to the cell inner membrane. It catalyses the reaction an acyl phosphate + sn-glycerol 3-phosphate = a 1-acyl-sn-glycero-3-phosphate + phosphate. It participates in lipid metabolism; phospholipid metabolism. In terms of biological role, catalyzes the transfer of an acyl group from acyl-phosphate (acyl-PO(4)) to glycerol-3-phosphate (G3P) to form lysophosphatidic acid (LPA). This enzyme utilizes acyl-phosphate as fatty acyl donor, but not acyl-CoA or acyl-ACP. The protein is Glycerol-3-phosphate acyltransferase of Granulibacter bethesdensis (strain ATCC BAA-1260 / CGDNIH1).